The chain runs to 846 residues: Integrin beta-PS (846 aa).

An N-terminal signal peptide occupies residues 1 to 28 (MILERNRRCQLALLMIAILAAIAGQTDA). At 29-777 (QKAAKLTAVS…NKECPAKVFM (749 aa)) the chain is on the extracellular side. Residues cysteine 46 and cysteine 55 are joined by a disulfide bond. The N-linked (GlcNAc...) asparagine glycan is linked to asparagine 72. Positions 186-419 (DLYYLMDLSK…ELVKEEYRKI (234 aa)) constitute a VWFA domain. The cysteines at positions 249 and 252 are disulfide-linked. N-linked (GlcNAc...) asparagine glycosylation is found at asparagine 266 and asparagine 277. Cysteine 300 and cysteine 341 are oxidised to a cystine. Asparagine 403 and asparagine 428 each carry an N-linked (GlcNAc...) asparagine glycan. Disulfide bonds link cysteine 441–cysteine 453, cysteine 473–cysteine 741, cysteine 507–cysteine 530, cysteine 522–cysteine 533, cysteine 535–cysteine 544, cysteine 546–cysteine 579, cysteine 561–cysteine 577, cysteine 571–cysteine 582, cysteine 584–cysteine 599, cysteine 601–cysteine 624, cysteine 606–cysteine 622, cysteine 614–cysteine 627, cysteine 629–cysteine 638, cysteine 640–cysteine 664, cysteine 647–cysteine 662, cysteine 656–cysteine 667, cysteine 669–cysteine 682, cysteine 685–cysteine 688, cysteine 692–cysteine 701, cysteine 698–cysteine 771, and cysteine 719–cysteine 749. I-EGF domains follow at residues 507–545 (CENP…NKCE), 546–600 (CSAT…KHCE), 601–639 (CDNF…SNCG), and 640–683 (CQES…RHCE). An N-linked (GlcNAc...) asparagine glycan is attached at asparagine 557. Residue asparagine 603 is glycosylated (N-linked (GlcNAc...) asparagine). N-linked (GlcNAc...) asparagine glycosylation occurs at asparagine 644. A glycan (N-linked (GlcNAc...) asparagine) is linked at asparagine 718. The helical transmembrane segment at 778–798 (LGIVMGVIAAIVLVGLAILLL) threads the bilayer. Over 799-846 (WKLLTTIHDRREFARFEKERMNAKWDTGENPIYKQATSTFKNPMYAGK) the chain is Cytoplasmic. Residues tyrosine 831 and tyrosine 843 each carry the phosphotyrosine modification.

This sequence belongs to the integrin beta chain family. Heterodimer of an alpha and a beta subunit. Beta-PS associates with either alpha-PS1, alpha-PS2, alpha-PS3, alpha-PS4 or alpha-PS5. In terms of tissue distribution, in ovaries, strongly expressed in follicle cells. In oocytes, expressed in the forming dorsal appendages (at protein level). Expressed in the embryonic dorsal cuticle, the larval eye and the wing imaginal disk. In testes, detected at the interface between somatic hub cells and cyst stem cells.

It localises to the cell membrane. Its subcellular location is the apical cell membrane. The protein resides in the lateral cell membrane. It is found in the basal cell membrane. Integrin alpha-PS1/beta-PS is a receptor for laminin. Integrin alpha-PS2/beta-PS is a receptor for Tig, wb and Ten-m. Contributes to endodermal integrity and adhesion between the midgut epithelium and the surrounding visceral muscle. Essential for migration of the primordial midgut cells and for maintaining, but not establishing, cell polarity in the midgut epithelium. The two beta subunits mediate midgut migration by distinct mechanisms: beta-PS requires rhea/talin and Itgbn does not. Required for rhea/talin correct cellular localization in the midgut. Required for many embryonic (dorsal closure and somatic muscle attachments) and postembryonic developmental processes (attachment between cell layers of imaginal disks, organization of ommatidial arrays and flight muscle development). Involved in the function and/or development of the olfactory system. In the testes, essential for shv-dependent maintenance of somatic hub cells and their localization to the apical tip. Plays a role in timely border cell migration during oogenesis. In Drosophila melanogaster (Fruit fly), this protein is Integrin beta-PS (mys).